A 496-amino-acid polypeptide reads, in one-letter code: Amidophosphoribosyltransferase (496 aa).

A propeptide spanning residues 1–21 (MNQSHSFPTDDPLDGDTLHEE) is cleaved from the precursor. C22 functions as the Nucleophile in the catalytic mechanism. Positions 22–241 (CGVFGILGHP…NGEVIICEIQ (220 aa)) constitute a Glutamine amidotransferase type-2 domain.

It in the C-terminal section; belongs to the purine/pyrimidine phosphoribosyltransferase family.

The catalysed reaction is 5-phospho-beta-D-ribosylamine + L-glutamate + diphosphate = 5-phospho-alpha-D-ribose 1-diphosphate + L-glutamine + H2O. It participates in purine metabolism; IMP biosynthesis via de novo pathway; N(1)-(5-phospho-D-ribosyl)glycinamide from 5-phospho-alpha-D-ribose 1-diphosphate: step 1/2. Its function is as follows. Catalyzes the formation of phosphoribosylamine from phosphoribosylpyrophosphate (PRPP) and glutamine. The protein is Amidophosphoribosyltransferase of Rhizobium etli (strain ATCC 51251 / DSM 11541 / JCM 21823 / NBRC 15573 / CFN 42).